Reading from the N-terminus, the 364-residue chain is Aminomethyltransferase (364 aa).

It belongs to the GcvT family. The glycine cleavage system is composed of four proteins: P, T, L and H.

The enzyme catalyses N(6)-[(R)-S(8)-aminomethyldihydrolipoyl]-L-lysyl-[protein] + (6S)-5,6,7,8-tetrahydrofolate = N(6)-[(R)-dihydrolipoyl]-L-lysyl-[protein] + (6R)-5,10-methylene-5,6,7,8-tetrahydrofolate + NH4(+). Functionally, the glycine cleavage system catalyzes the degradation of glycine. The polypeptide is Aminomethyltransferase (Escherichia coli O6:H1 (strain CFT073 / ATCC 700928 / UPEC)).